The following is a 196-amino-acid chain: Phosphoheptose isomerase (196 aa).

An SIS domain is found at 34 to 196 (MVQCLLGGKK…DRTLFPQDEA (163 aa)). 49-51 (NGG) contacts substrate. Positions 58 and 62 each coordinate Zn(2+). Substrate contacts are provided by residues Glu-62, 91–92 (ND), 117–119 (STS), Ser-122, and Gln-172. Zn(2+) contacts are provided by Gln-172 and His-180.

Belongs to the SIS family. GmhA subfamily. In terms of assembly, homotetramer. It depends on Zn(2+) as a cofactor.

The protein localises to the cytoplasm. It catalyses the reaction 2 D-sedoheptulose 7-phosphate = D-glycero-alpha-D-manno-heptose 7-phosphate + D-glycero-beta-D-manno-heptose 7-phosphate. It functions in the pathway carbohydrate biosynthesis; D-glycero-D-manno-heptose 7-phosphate biosynthesis; D-glycero-alpha-D-manno-heptose 7-phosphate and D-glycero-beta-D-manno-heptose 7-phosphate from sedoheptulose 7-phosphate: step 1/1. Its function is as follows. Catalyzes the isomerization of sedoheptulose 7-phosphate in D-glycero-D-manno-heptose 7-phosphate. This is Phosphoheptose isomerase from Shewanella denitrificans (strain OS217 / ATCC BAA-1090 / DSM 15013).